The primary structure comprises 2481 residues: Tetratricopeptide repeat protein 28 (2481 aa).

Position 1 is an N-acetylmethionine (Met-1). The segment covering 1–14 has biased composition (pro residues); the sequence is MEQSPPPAPEPTQG. Positions 1–48 are disordered; it reads MEQSPPPAPEPTQGPTPARSRRRREPESPPASAPIPLFGADTIGQRSP. At Ser-28 the chain carries Phosphoserine. TPR repeat units follow at residues 58–91, 93–125, 126–159, 196–229, 234–267, 274–307, 314–347, 354–387, 394–427, 434–467, 474–507, 514–547, 554–587, 594–627, 634–667, 674–707, 714–747, 754–787, 794–827, 834–867, 877–910, 917–950, 957–990, 997–1030, 1037–1070, 1077–1110, 1117–1150, and 1169–1202; these read FVEKVRQSNQACHDGDFHTAIVLYNEALAVDPQN, ILYSNRSAAYMKIQQYDKALDDAIKARLLNPKW, PKAYFRQGVALQYLGRHADALAAFASGLAQDPKS, FVVVSVVGQELLTAGHHGASVVVLEAALKIGTCS, GSVFSALSSAYWSLGNTEKSTGYMQQDLDVAKTL, CRAHGNLGSAFFSKGNYREALTNHRHQLVLAMKL, SSALSSLGHVYTAIGDYPNALASHKQCVLLAKQS, ARELGNMGAVYIAMGDFENAVQCHEQHLKIAKDL, ARAYSNLGSAYHYRRNFDKAMSYHNYVLELAQEL, MRAYAGLGHAARCMQDLERAKQYHEQQLGIAEDL, GRASSNLGIIHQMKGDYDTALKLHKTHLCIAQEL, GRAYGNMGNAYNALGMYDQAVKYHRQELQISMEV, ASTHGNLAVAYQALGAHDRALQHYQNHLNIAREL, ARALSNLGNFHCSRGEYVQAAPYYEQYLRLAPDL, GKVCHNLGYAHYCLGNYQEAVKYYEQDLALAKDL, AKAYCNLGLAFKALLNFSKAEECQKYLLSLAQSL, FRALGNLGDIFICKKDINGAIKFYEQQLGLAHQV, ASAYAALGTAYRMIQKYDKALGYHTQELEVYQEL, CRAHGHLAAVYMALGKYTMAFKCYEEQLDLGQKL, AQVYGNMGITKMNMNVMEEAIGYFEQQLAMLQQL, GRAYGNLGDCYEALGDYEEAIKYYEQYLSVAQSL, AKAYRGLGNGHRAMGSLQQALVCFEKRLVVAHEL, AQAYGELGSLHSQLGNYEQAISCLERQLNIARDM, SDAACGLGGVYQQMGEYDTALQYHQLDLQIAEET, GRAYGNLGLTYESLGTFERAVVYQEQHLSIAAQM, TVSYSSLGRTHHALQNYSQAVMYLQEGLRLAEQL, AKIRHGLGLSLWASGNLEEAQHQLYRASALFETI, and TSSYQALQRVLVSLGHHDEALAVAERGRTRAFAD. Phosphoserine is present on Ser-1590. Disordered stretches follow at residues 2004-2055, 2075-2161, and 2176-2339; these read FVSK…DEEE, NTCF…DPQE, and AVER…PADA. Polar residues-rich tracts occupy residues 2029 to 2043 and 2096 to 2122; these read AYLQRSTLPRSQLPP and SVSSKGSISTPNSPVKMTLIPSPNSPF. Ser-2104 carries the phosphoserine modification. The segment covering 2130-2146 has biased composition (low complexity); sequence SSDTGESDQSSTETDST. Positions 2149–2159 are enriched in basic and acidic residues; sequence SQEESNPKLDP. Positions 2183-2214 are enriched in polar residues; the sequence is SGGQVSKSNNPEDGVQAPSSTAVFRASETSAF. 2 positions are modified to phosphoserine: Ser-2224 and Ser-2251. Polar residues predominate over residues 2238-2282; that stretch reads RSSSLPKVSSGYSSPTTSEMSIKDSPSQHSGRPSPGCDSQTSQLD. Positions 2307–2339 are enriched in low complexity; sequence SPSSGHQSPAGSAPSPALSYSSAGSARSSPADA. Ser-2393 and Ser-2398 each carry phosphoserine. The tract at residues 2420–2467 is disordered; it reads QHDGAPPKAPPNGHWRTETTSLGSLPLPAGPPATAPARPLRLPSGNGY.

As to quaternary structure, interacts with AURKB. In terms of tissue distribution, widely expressed in fetal tissues. In adult tissues, expressed in testis and ovary and, at much lower levels, in kidney and pancreas.

The protein resides in the cytoplasm. It is found in the cytoskeleton. The protein localises to the microtubule organizing center. It localises to the centrosome. Its subcellular location is the spindle. The protein resides in the spindle pole. It is found in the midbody. Functionally, during mitosis, may be involved in the condensation of spindle midzone microtubules, leading to the formation of midbody. The sequence is that of Tetratricopeptide repeat protein 28 (TTC28) from Homo sapiens (Human).